Consider the following 424-residue polypeptide: Protein CapL (424 aa).

Belongs to the UDP-glucose/GDP-mannose dehydrogenase family.

It participates in capsule biogenesis; capsule polysaccharide biosynthesis. In terms of biological role, required for the biosynthesis of type 1 capsular polysaccharide. The polypeptide is Protein CapL (capL) (Staphylococcus aureus).